A 179-amino-acid polypeptide reads, in one-letter code: Coatomer subunit zeta-2 (179 aa).

Belongs to the adaptor complexes small subunit family. As to quaternary structure, oligomeric complex that consists of at least the alpha, beta, beta', gamma, delta, epsilon and zeta subunits.

Its subcellular location is the cytoplasm. The protein localises to the golgi apparatus membrane. The protein resides in the cytoplasmic vesicle. It is found in the COPI-coated vesicle membrane. Its function is as follows. The coatomer is a cytosolic protein complex that binds to dilysine motifs and reversibly associates with Golgi non-clathrin-coated vesicles, which further mediate biosynthetic protein transport from the ER, via the Golgi up to the trans Golgi network. Coatomer complex is required for budding from Golgi membranes, and is essential for the retrograde Golgi-to-ER transport of dilysine-tagged proteins. The zeta subunit may be involved in regulating the coat assembly and, hence, the rate of biosynthetic protein transport due to its association-dissociation properties with the coatomer complex. This Arabidopsis thaliana (Mouse-ear cress) protein is Coatomer subunit zeta-2.